The primary structure comprises 102 residues: Large ribosomal subunit protein bL21 (102 aa).

This sequence belongs to the bacterial ribosomal protein bL21 family. In terms of assembly, part of the 50S ribosomal subunit. Contacts protein L20.

This protein binds to 23S rRNA in the presence of protein L20. The protein is Large ribosomal subunit protein bL21 of Myxococcus xanthus (strain DK1622).